Consider the following 91-residue polypeptide: Acylphosphatase (91 aa).

The Acylphosphatase-like domain occupies 3-90 (RVLIRVKGKV…EIYLDFSITQ (88 aa)). Active-site residues include R18 and N36.

This sequence belongs to the acylphosphatase family.

It catalyses the reaction an acyl phosphate + H2O = a carboxylate + phosphate + H(+). In Shewanella amazonensis (strain ATCC BAA-1098 / SB2B), this protein is Acylphosphatase (acyP).